The chain runs to 311 residues: Delta-1-pyrroline-5-carboxylate reductase kk1I (311 aa).

The signal sequence occupies residues 1–31 (MTKRESNTLAVLGCGMVFLVSLLDLANRLLG). Residue Asn-59 is glycosylated (N-linked (GlcNAc...) asparagine).

It belongs to the pyrroline-5-carboxylate reductase family.

It functions in the pathway secondary metabolite biosynthesis. Delta-1-pyrroline-5-carboxylate reductase; part of the gene cluster that mediates the biosynthesis of KK-1, a novel cyclic depsipeptide with 10 residues which is a promising active compound with high activity against many plant pathogens, especially Botrytis cinerea. Within the pathway, kk1I catalyzes the synthesis of the L-pipecolic acid residue of KK-1 from delta-1-pyrroline-5-carboxylate (P5C), a metabolic intermediate of lysine. The nonribosomal peptide synthetase (NRPS) kk1B catalyzes the elongation and cyclization of the decapeptide chain composed of 1 D-lactic acid residue (D-Lac), 1 pipecolic acid residue (Pip), 1 aspartic acid residue (Asp), 1 isoleucine residue (Ile), 1 glycine residue (Gly), 1 tyrosine residue (Tyr) and 4 valine residues (Val). The Asp, Ile and 3 Val residues are N-methylated by the 5 methyltransferase domains from the NRPS (found in modules 3, 5, 6, 7 and 9), whereas the Tyr residue is O-methylated by the cluster encoded O-methyltransferase kk1A. The thioesterase kk1J is likely to be involved in the corrective mechanism of peptide chain synthesis. The D-lactate dehydrogenase kk1H is involved in the synthesis of D-lactic acid from pyruvic acid, which is recognized by the A domain of the first kk1B module. The pyrroline-5-carboxylate reductase kk1I is involved in the synthesis of the L-pipecolic acid residue of KK-1 from delta-1-pyrroline-5-carboxylate (P5C), a metabolic intermediate of lysine. It still is unclear how kk1C and kk1D are involved in the production of KK-1. In Curvularia clavata, this protein is Delta-1-pyrroline-5-carboxylate reductase kk1I.